An 85-amino-acid chain; its full sequence is Small ribosomal subunit protein bS16 (85 aa).

The protein belongs to the bacterial ribosomal protein bS16 family.

In Neorickettsia sennetsu (strain ATCC VR-367 / Miyayama) (Ehrlichia sennetsu), this protein is Small ribosomal subunit protein bS16.